Reading from the N-terminus, the 291-residue chain is Ribonuclease Z (291 aa).

Zn(2+) contacts are provided by H60, H62, D64, H65, H132, D200, and H256. The active-site Proton acceptor is the D64.

It belongs to the RNase Z family. Homodimer. Zn(2+) is required as a cofactor.

It carries out the reaction Endonucleolytic cleavage of RNA, removing extra 3' nucleotides from tRNA precursor, generating 3' termini of tRNAs. A 3'-hydroxy group is left at the tRNA terminus and a 5'-phosphoryl group is left at the trailer molecule.. Zinc phosphodiesterase, which displays some tRNA 3'-processing endonuclease activity. Probably involved in tRNA maturation, by removing a 3'-trailer from precursor tRNA. In Metallosphaera sedula (strain ATCC 51363 / DSM 5348 / JCM 9185 / NBRC 15509 / TH2), this protein is Ribonuclease Z.